The chain runs to 308 residues: Carnitine transport binding protein OpuCC (308 aa).

Positions 1 to 22 (MKKKFIALFSVLLLTSSLFLSS) are cleaved as a signal peptide. Residue Cys23 is the site of N-palmitoyl cysteine attachment. Cys23 carries the S-diacylglycerol cysteine lipid modification.

Belongs to the OsmX family. The complex is composed of two ATP-binding proteins (OpuCA), two transmembrane proteins (OpuCB and OpuCD) and a solute-binding protein (OpuCC).

It is found in the cell membrane. Part of the ABC transporter complex OpuCABCD involved in carnitine uptake. Involved, with BetL and GbuABC, in osmoprotection and cryoprotection of Listeria. Can also mediate weak glycine betaine transport. In Listeria monocytogenes serotype 1/2a (strain 10403S), this protein is Carnitine transport binding protein OpuCC (opuCC).